The sequence spans 301 residues: Protoheme IX farnesyltransferase 2 (301 aa).

The next 9 helical transmembrane spans lie at 29–49 (VVALMLLTVLVGMCLAVPTAV), 51–71 (VQPLIAGMFGIALMAGSAAAL), 101–121 (ALIFAASIGGLGFVVLYVLVN), 123–143 (LTAWLTFASLIGYALVYTAYL), 150–170 (NIVIGGLAGAMPPLLGWTAVT), 177–197 (ALLLVIIIFTWTPPHFWALAI), 223–243 (CILLYTVLLAIACLLPVLVGM), 244–264 (CGPMYFVCSSLLSSVFIYKAW), and 281–301 (FSIYHLMLLFMALLIDHYLWS).

It belongs to the UbiA prenyltransferase family. Protoheme IX farnesyltransferase subfamily.

The protein localises to the cell inner membrane. The catalysed reaction is heme b + (2E,6E)-farnesyl diphosphate + H2O = Fe(II)-heme o + diphosphate. Its pathway is porphyrin-containing compound metabolism; heme O biosynthesis; heme O from protoheme: step 1/1. Its function is as follows. Converts heme B (protoheme IX) to heme O by substitution of the vinyl group on carbon 2 of heme B porphyrin ring with a hydroxyethyl farnesyl side group. The sequence is that of Protoheme IX farnesyltransferase 2 from Shewanella sp. (strain W3-18-1).